Here is a 428-residue protein sequence, read N- to C-terminus: tRNA(Ile)-lysidine synthase (428 aa).

28–33 (SGGVDS) provides a ligand contact to ATP.

It belongs to the tRNA(Ile)-lysidine synthase family.

Its subcellular location is the cytoplasm. It catalyses the reaction cytidine(34) in tRNA(Ile2) + L-lysine + ATP = lysidine(34) in tRNA(Ile2) + AMP + diphosphate + H(+). Its function is as follows. Ligates lysine onto the cytidine present at position 34 of the AUA codon-specific tRNA(Ile) that contains the anticodon CAU, in an ATP-dependent manner. Cytidine is converted to lysidine, thus changing the amino acid specificity of the tRNA from methionine to isoleucine. This chain is tRNA(Ile)-lysidine synthase, found in Streptococcus pyogenes serotype M6 (strain ATCC BAA-946 / MGAS10394).